A 720-amino-acid polypeptide reads, in one-letter code: Transcription factor bHLH155 (720 aa).

Residues 522–534 show a composition bias toward polar residues; the sequence is YPSSSSDQFQTSL. The tract at residues 522-558 is disordered; it reads YPSSSSDQFQTSLDIPKKNKKRAKPGESSRPRPRDRQ. The Nuclear localization signal signature appears at 540 to 547; it reads NKKRAKPG. The bHLH domain maps to 544-593; the sequence is AKPGESSRPRPRDRQLIQDRIKELRELVPNGSKCSIDSLLERTIKHMLFL. Over residues 545-558 the composition is skewed to basic and acidic residues; sequence KPGESSRPRPRDRQ.

This sequence belongs to the bHLH protein family. LHW subfamily. In terms of assembly, homodimer.

The protein localises to the nucleus. Functionally, transcription factor that may regulate root development. The sequence is that of Transcription factor bHLH155 (BHLH155) from Arabidopsis thaliana (Mouse-ear cress).